Reading from the N-terminus, the 172-residue chain is Single-stranded DNA-binding protein A (172 aa).

The region spanning 1–104 (MLNRVVLVGR…VQAESVQFLE (104 aa)) is the SSB domain. Y82 carries the phosphotyrosine modification. A disordered region spans residues 103 to 172 (LEPKNGGGSG…IDISDDDLPF (70 aa)). The segment covering 107–131 (NGGGSGSGGYNEGNSGGGQYFGGGQ) has biased composition (gly residues). Positions 132-149 (NDNPFGGNQNNQRRNQGN) are enriched in low complexity. The Important for interaction with partner proteins motif lies at 167 to 172 (DDDLPF).

In terms of assembly, homotetramer. Interacts with proteins involved in DNA metabolism such as PriA, RecQ, RecG, RecS, DnaE, RarA, RecJ, RecO, SbcC, RecD2 (formerly YrrC), XseA and Ung. Interacts with RecQ via its 10 C-terminal residues. Interacts with RecD2. In terms of processing, phosphorylated by YwqD, which increases ssDNA affinity; dephosphorylated by YwqE.

It localises to the cytoplasm. Its subcellular location is the nucleoid. Its function is as follows. Plays an important role in DNA replication, recombination and repair. Binds to single-stranded (ss)DNA and to an array of partner proteins to recruit them to their sites of action during DNA metabolism. Associates with oriC, this requires DnaA. SsbA binding to ssDNA prevents DnaB and DnaD individually from binding to DNA. Has a 20-fold higher affinity for ssDNA than SsbB; SsbA and DprA activate the homologous DNA strand exchange function of RecA-ATP. Enhances the activity of 3'-5' DNA helicase RecQ. This is Single-stranded DNA-binding protein A (ssbA) from Bacillus subtilis (strain 168).